The sequence spans 432 residues: CBL-interacting serine/threonine-protein kinase 17 (432 aa).

Positions 11–266 (YELGRTLGEG…IAGIKAHDWF (256 aa)) constitute a Protein kinase domain. ATP-binding positions include 17-25 (LGEGNSAKV) and Lys40. Asp134 serves as the catalytic Proton acceptor. The segment at 152 to 181 (DFGLSALSQHYREDGLLHTTCGSPNYVAPE) is activation loop. Ser156 carries the phosphoserine modification. Thr170 is modified (phosphothreonine). Residues 301–325 (DSPTIINAFQLIGMSSFLDLSGFFE) enclose the NAF domain. The segment at 331-360 (ERQIRFTSNSLAKDLLENIETIFTEMGFCL) is PPI.

The protein belongs to the protein kinase superfamily. CAMK Ser/Thr protein kinase family. SNF1 subfamily. In terms of assembly, interacts with CBL1. Mn(2+) is required as a cofactor.

The catalysed reaction is L-seryl-[protein] + ATP = O-phospho-L-seryl-[protein] + ADP + H(+). The enzyme catalyses L-threonyl-[protein] + ATP = O-phospho-L-threonyl-[protein] + ADP + H(+). Functionally, CIPK serine-threonine protein kinases interact with CBL proteins. Binding of a CBL protein to the regulatory NAF domain of CIPK protein lead to the activation of the kinase in a calcium-dependent manner. The chain is CBL-interacting serine/threonine-protein kinase 17 (CIPK17) from Arabidopsis thaliana (Mouse-ear cress).